The primary structure comprises 259 residues: Tryptophan synthase alpha chain (259 aa).

Catalysis depends on proton acceptor residues Glu48 and Asp59.

It belongs to the TrpA family. Tetramer of two alpha and two beta chains.

The catalysed reaction is (1S,2R)-1-C-(indol-3-yl)glycerol 3-phosphate + L-serine = D-glyceraldehyde 3-phosphate + L-tryptophan + H2O. It functions in the pathway amino-acid biosynthesis; L-tryptophan biosynthesis; L-tryptophan from chorismate: step 5/5. Functionally, the alpha subunit is responsible for the aldol cleavage of indoleglycerol phosphate to indole and glyceraldehyde 3-phosphate. In Syntrophomonas wolfei subsp. wolfei (strain DSM 2245B / Goettingen), this protein is Tryptophan synthase alpha chain.